Reading from the N-terminus, the 1027-residue chain is Translation initiation factor IF-2 (1027 aa).

The tract at residues 31-433 (YVKSASSTVE…GGVRLPRGNG (403 aa)) is disordered. Gly residues predominate over residues 57-68 (KKGGGDSNGRAG). Over residues 110–122 (GPKPGPKPGPKAP) the composition is skewed to pro residues. The span at 123 to 145 (APETKPFEEAPAPAAKADAPAQP) shows a compositional bias: low complexity. Positions 148–171 (EQPRSEQPRSEQPRSEQPRSERSG) are enriched in basic and acidic residues. 2 stretches are compositionally biased toward pro residues: residues 174–188 (PGGP…PKPG) and 201–212 (PPKPQSPKPGPR). Residues 237 to 268 (PGGGQRQGGQGPGRGGPQGGRPDRQGGGGQGA) are compositionally biased toward gly residues. Positions 293–302 (GMMPPRPNPG) are enriched in pro residues. The segment covering 311-397 (SGGGPGGGRG…GAAGAFGRPG (87 aa)) has biased composition (gly residues). Basic residues predominate over residues 401 to 410 (RRGRKSKRQK). A tr-type G domain is found at 523-695 (SRPPVVTVMG…ILLTADATLD (173 aa)). The segment at 532–539 (GHVDHGKT) is G1. 532–539 (GHVDHGKT) provides a ligand contact to GTP. Positions 557-561 (GITQH) are G2. The tract at residues 582–585 (DTPG) is G3. GTP-binding positions include 582 to 586 (DTPGH) and 636 to 639 (NKID). The segment at 636 to 639 (NKID) is G4. Positions 672-674 (SAR) are G5.

It belongs to the TRAFAC class translation factor GTPase superfamily. Classic translation factor GTPase family. IF-2 subfamily.

The protein resides in the cytoplasm. Its function is as follows. One of the essential components for the initiation of protein synthesis. Protects formylmethionyl-tRNA from spontaneous hydrolysis and promotes its binding to the 30S ribosomal subunits. Also involved in the hydrolysis of GTP during the formation of the 70S ribosomal complex. This is Translation initiation factor IF-2 from Saccharopolyspora erythraea (strain ATCC 11635 / DSM 40517 / JCM 4748 / NBRC 13426 / NCIMB 8594 / NRRL 2338).